A 117-amino-acid polypeptide reads, in one-letter code: Hydrogenase maturation factor HypA (117 aa).

Residue His-2 participates in Ni(2+) binding. Zn(2+)-binding residues include Cys-73, Cys-76, Cys-89, and Cys-92.

Belongs to the HypA/HybF family.

Functionally, involved in the maturation of [NiFe] hydrogenases. Required for nickel insertion into the metal center of the hydrogenase. This Shewanella baltica (strain OS223) protein is Hydrogenase maturation factor HypA.